The following is a 379-amino-acid chain: Cytochrome b (379 aa).

The next 4 helical transmembrane spans lie at 33-53 (FGSL…FLAM), 77-98 (WTIR…FIHV), 113-133 (WNIG…GYVL), and 178-198 (FFAL…IHLL). Residues His83 and His97 each contribute to the heme b site. 2 residues coordinate heme b: His182 and His196. A ubiquinone is bound at residue His201. Helical transmembrane passes span 226–246 (TKDF…TLFY), 288–308 (PGGV…PFLQ), 320–340 (LSQF…WIGG), and 347–367 (FISI…FIMP).

Belongs to the cytochrome b family. As to quaternary structure, the cytochrome bc1 complex contains 11 subunits: 3 respiratory subunits (MT-CYB, CYC1 and UQCRFS1), 2 core proteins (UQCRC1 and UQCRC2) and 6 low-molecular weight proteins (UQCRH/QCR6, UQCRB/QCR7, UQCRQ/QCR8, UQCR10/QCR9, UQCR11/QCR10 and a cleavage product of UQCRFS1). This cytochrome bc1 complex then forms a dimer. The cofactor is heme b.

Its subcellular location is the mitochondrion inner membrane. Component of the ubiquinol-cytochrome c reductase complex (complex III or cytochrome b-c1 complex) that is part of the mitochondrial respiratory chain. The b-c1 complex mediates electron transfer from ubiquinol to cytochrome c. Contributes to the generation of a proton gradient across the mitochondrial membrane that is then used for ATP synthesis. The sequence is that of Cytochrome b (MT-CYB) from Lepilemur ruficaudatus (Red-tailed sportive lemur).